A 334-amino-acid polypeptide reads, in one-letter code: Probable peptidoglycan endopeptidase LytE (334 aa).

An N-terminal signal peptide occupies residues 1–25 (MKKQIITATTAVVLGSTLFAGAASA). 3 LysM domains span residues 26–69 (QSIK…TLSI), 86–129 (STYK…VLKL), and 149–192 (STYK…VLKV). 3 disordered regions span residues 70-89 (NGKS…STYK), 131-153 (GSTS…TYKV), and 195-215 (TSTS…KTSS). Low complexity-rich tracts occupy residues 72–87 (KSTS…SSST) and 132–153 (STSS…TYKV). The 118-residue stretch at 217-334 (SLNVSKLVSD…KPRYLGAKRF (118 aa)) folds into the NlpC/P60 domain. The Nucleophile role is filled by Cys-247. His-296 (proton acceptor) is an active-site residue. His-308 is an active-site residue.

Belongs to the peptidase C40 family.

It is found in the secreted. The protein localises to the cell wall. Functionally, cell wall hydrolase that cleaves gamma-D-glutamate-meso-diaminopimelate bonds in peptidoglycan. Seems to play a role in cell separation during vegetative growth. The polypeptide is Probable peptidoglycan endopeptidase LytE (lytE) (Bacillus subtilis (strain 168)).